Reading from the N-terminus, the 632-residue chain is Extracellular metalloproteinase 2 (632 aa).

The signal sequence occupies residues 1–19; the sequence is MHGLLLAGLAAALPLGVAG. Residues 20–244 constitute a propeptide that is removed on maturation; that stretch reads LPARQQSGLS…VHNVVDYVAS (225 aa). Asparagine 270 carries an N-linked (GlcNAc...) asparagine glycan. Histidine 429 provides a ligand contact to Zn(2+). Glutamate 430 is a catalytic residue. Residue histidine 433 coordinates Zn(2+).

The protein belongs to the peptidase M36 family. Requires Zn(2+) as cofactor.

It localises to the secreted. Secreted metalloproteinase that allows assimilation of proteinaceous substrates and probably acts as a virulence factor. The chain is Extracellular metalloproteinase 2 (MEP2) from Arthroderma gypseum (strain ATCC MYA-4604 / CBS 118893) (Microsporum gypseum).